A 24-amino-acid chain; its full sequence is FLPIIASVAAKVFPKIFCAISKKC.

C18 and C24 are oxidised to a cystine.

In terms of tissue distribution, expressed by the skin glands.

It localises to the secreted. Antibacterial activity against Gram-positive bacterium S.aureus and Gram-negative bacterium E.coli. Has activity against C.albicans. This chain is Brevinin-1Pe, found in Lithobates pipiens (Northern leopard frog).